A 507-amino-acid polypeptide reads, in one-letter code: ATP synthase subunit alpha, chloroplastic (507 aa).

Glycine 170 to threonine 177 contacts ATP.

Belongs to the ATPase alpha/beta chains family. F-type ATPases have 2 components, CF(1) - the catalytic core - and CF(0) - the membrane proton channel. CF(1) has five subunits: alpha(3), beta(3), gamma(1), delta(1), epsilon(1). CF(0) has four main subunits: a, b, b' and c.

It localises to the plastid. Its subcellular location is the chloroplast thylakoid membrane. It catalyses the reaction ATP + H2O + 4 H(+)(in) = ADP + phosphate + 5 H(+)(out). Functionally, produces ATP from ADP in the presence of a proton gradient across the membrane. The alpha chain is a regulatory subunit. This is ATP synthase subunit alpha, chloroplastic from Panax ginseng (Korean ginseng).